A 78-amino-acid polypeptide reads, in one-letter code: D-alanyl carrier protein (78 aa).

One can recognise a Carrier domain in the interval 1–78 (MDVENTVVEI…KIIAKAKELQ (78 aa)). At Ser36 the chain carries O-(pantetheine 4'-phosphoryl)serine.

Belongs to the DltC family. 4'-phosphopantetheine is transferred from CoA to a specific serine of apo-DCP.

It localises to the cytoplasm. It functions in the pathway cell wall biogenesis; lipoteichoic acid biosynthesis. Carrier protein involved in the D-alanylation of lipoteichoic acid (LTA). The loading of thioester-linked D-alanine onto DltC is catalyzed by D-alanine--D-alanyl carrier protein ligase DltA. The DltC-carried D-alanyl group is further transferred to cell membrane phosphatidylglycerol (PG) by forming an ester bond, probably catalyzed by DltD. D-alanylation of LTA plays an important role in modulating the properties of the cell wall in Gram-positive bacteria, influencing the net charge of the cell wall. This is D-alanyl carrier protein from Latilactobacillus sakei subsp. sakei (strain 23K) (Lactobacillus sakei subsp. sakei).